The chain runs to 435 residues: Mitochondrial association factor 1 form a1 (435 aa).

Positions 1 to 20 (MWRIWRCRLSFLFATGCLLG) are cleaved as a signal peptide. Over 21–95 (ALTAGLGSQM…SVTARRRRNR (75 aa)) the chain is Vacuolar. Residues 43-88 (GVADASQEAGDVVEERTERTEEQVFAPGPPRRHSSESLFPRNASVT) form a disordered region. Residues 55 to 64 (VEERTERTEE) show a composition bias toward basic and acidic residues. A helical membrane pass occupies residues 96–116 (RIAPIATAVGVAVILAALYVL). Topologically, residues 117–435 (RRRRAQPPQE…ERKYKFPQGD (319 aa)) are cytoplasmic. Residues 120 to 162 (RAQPPQEPEPPTRLRTPRPRAPSEQQQPSESEPPAEVPMTPDP) form a disordered region. The segment covering 141–153 (PSEQQQPSESEPP) has biased composition (low complexity).

As to quaternary structure, interacts with host SAMM50.

The protein localises to the parasitophorous vacuole membrane. In terms of biological role, during host cell infection by tachyzoites, does not play a role in tethering the parasitophorous vacuole to the host mitochondria, probably because it does not bind host mitochondrial import protein TOMM70. This is Mitochondrial association factor 1 form a1 from Toxoplasma gondii.